The chain runs to 61 residues: UPF0434 protein Pfl01_4174 (61 aa).

This sequence belongs to the UPF0434 family.

The sequence is that of UPF0434 protein Pfl01_4174 from Pseudomonas fluorescens (strain Pf0-1).